The primary structure comprises 738 residues: Polyribonucleotide nucleotidyltransferase (738 aa).

The Mg(2+) site is built by D514 and D520. The region spanning 580–639 (PRIITVKIPVDKIGEVIGPKGKMINQIQEDTGAEITIEDDGTIYIGAQVGSQAEAARATI) is the KH domain. One can recognise an S1 motif domain in the interval 651–723 (GERYLGTVVK…SRGKLSLIPV (73 aa)).

It belongs to the polyribonucleotide nucleotidyltransferase family. Mg(2+) is required as a cofactor.

The protein resides in the cytoplasm. The catalysed reaction is RNA(n+1) + phosphate = RNA(n) + a ribonucleoside 5'-diphosphate. Its function is as follows. Involved in mRNA degradation. Catalyzes the phosphorolysis of single-stranded polyribonucleotides processively in the 3'- to 5'-direction. The sequence is that of Polyribonucleotide nucleotidyltransferase from Streptomyces avermitilis (strain ATCC 31267 / DSM 46492 / JCM 5070 / NBRC 14893 / NCIMB 12804 / NRRL 8165 / MA-4680).